We begin with the raw amino-acid sequence, 470 residues long: 3-isopropylmalate dehydratase large subunit (470 aa).

Residues Cys348, Cys409, and Cys412 each coordinate [4Fe-4S] cluster.

Belongs to the aconitase/IPM isomerase family. LeuC type 1 subfamily. In terms of assembly, heterodimer of LeuC and LeuD. [4Fe-4S] cluster serves as cofactor.

It catalyses the reaction (2R,3S)-3-isopropylmalate = (2S)-2-isopropylmalate. The protein operates within amino-acid biosynthesis; L-leucine biosynthesis; L-leucine from 3-methyl-2-oxobutanoate: step 2/4. In terms of biological role, catalyzes the isomerization between 2-isopropylmalate and 3-isopropylmalate, via the formation of 2-isopropylmaleate. This Acidithiobacillus ferrooxidans (strain ATCC 23270 / DSM 14882 / CIP 104768 / NCIMB 8455) (Ferrobacillus ferrooxidans (strain ATCC 23270)) protein is 3-isopropylmalate dehydratase large subunit.